The following is a 118-amino-acid chain: Large ribosomal subunit protein bL19 (118 aa).

Belongs to the bacterial ribosomal protein bL19 family.

In terms of biological role, this protein is located at the 30S-50S ribosomal subunit interface and may play a role in the structure and function of the aminoacyl-tRNA binding site. The protein is Large ribosomal subunit protein bL19 of Campylobacter curvus (strain 525.92).